Consider the following 676-residue polypeptide: MACPFFRRADSLTRQPSVIAEPGGHWALEDEELSDDALTLTHLQMAIQLLTAPSNEDLNTAVTSLVAKYRQNWPNIHKLKLDPQTFKSCANYDYLADIQELLLKMDEASASEILVLLGEELITCCCTGIIERAFRCLGTDLQEFLGSLDGVYDVLKLQEEDVTDTGFVCAGEGELIFTSERPVIAWLLLGSLKALTRMLYKVDVNIKIEPVEGDARRYRYLFSLVKDNSQTMLMGRPTSVSKTIPETVQRSNSSNASDLQMNSSSFCKMFPWHFIMNEQLELVQLGRGFSKLYKPYMADFGCQATTYFDFKRPKGLTMKFRDIVRRTYTPFLIGLNNPPGAVDFPAIGLEIKGQMVHCPESNSLLFIGSPFLDGLDGLTCNGLFISDIPLHDATREVILVGEQARAQDGLRRRMDKIKNSIEEANSAVTKERKKNVSLLHLIFPAEIAEKLWLGSSIDAKTYPDVTILFSDIVGFTSICSRATPFMVISMLEGLYKDFDEFCDFFDVYKVETIGDAYCVASGLHRASIYDAHKVAWMALKMIDACSKHITHDGEQIKMRIGLHTGTVLAGVVGRKMPRYCLFGHSVTIANKFESGSEALKINVSPTTKDWLTKHEGFEFELQPRDPSFLPKEFPNPGGTETCYFLESFRNPALDSELPLVEHINVSMKTISEGGDA.

Residues 466–593 (TILFSDIVGF…HSVTIANKFE (128 aa)) enclose the Guanylate cyclase domain.

This sequence belongs to the adenylyl cyclase class-4/guanylyl cyclase family. As to quaternary structure, heterodimer. As to expression, head, where it is preferentially expressed in the CNS and the retina. Not found in bodies.

The protein resides in the cytoplasm. It catalyses the reaction GTP = 3',5'-cyclic GMP + diphosphate. May have a role in phototransduction. Catalyzes the conversion of GTP to cGMP, a common second messenger that is utilized in a wide variety of cells and signal transduction pathways. A second subunit is required for enzyme activity. The sequence is that of Head-specific guanylate cyclase (Gycalpha99B) from Drosophila melanogaster (Fruit fly).